A 250-amino-acid chain; its full sequence is tRNA (guanine-N(1)-)-methyltransferase (250 aa).

S-adenosyl-L-methionine is bound by residues Gly116 and 136 to 141; that span reads IGDYVL.

The protein belongs to the RNA methyltransferase TrmD family. Homodimer.

The protein resides in the cytoplasm. It catalyses the reaction guanosine(37) in tRNA + S-adenosyl-L-methionine = N(1)-methylguanosine(37) in tRNA + S-adenosyl-L-homocysteine + H(+). In terms of biological role, specifically methylates guanosine-37 in various tRNAs. The protein is tRNA (guanine-N(1)-)-methyltransferase of Pseudomonas entomophila (strain L48).